The sequence spans 143 residues: MKTYFQKPQEVQRKWYIIDARDKIVGKVAEKVACLLRGKHKEVFSPHVDTGDHVIVINASKAIFSGKKETQKLYSAYSGYIGGQKTFSPVQIRQKRPNFIIEHAVRGMIPHNRLGRKIYTKLHVYEGSDHPHAAQKPIPVTLD.

Belongs to the universal ribosomal protein uL13 family. Part of the 50S ribosomal subunit.

In terms of biological role, this protein is one of the early assembly proteins of the 50S ribosomal subunit, although it is not seen to bind rRNA by itself. It is important during the early stages of 50S assembly. This Methylacidiphilum infernorum (isolate V4) (Methylokorus infernorum (strain V4)) protein is Large ribosomal subunit protein uL13.